The chain runs to 264 residues: Thymidylate synthase (264 aa).

Position 21 (arginine 21) interacts with dUMP. Histidine 51 contributes to the (6R)-5,10-methylene-5,6,7,8-tetrahydrofolate binding site. A dUMP-binding site is contributed by 126 to 127 (RR). The active-site Nucleophile is cysteine 146. DUMP is bound by residues 166 to 169 (RSAD), asparagine 177, and 207 to 209 (HLY). Aspartate 169 contacts (6R)-5,10-methylene-5,6,7,8-tetrahydrofolate. Alanine 263 serves as a coordination point for (6R)-5,10-methylene-5,6,7,8-tetrahydrofolate.

It belongs to the thymidylate synthase family. Bacterial-type ThyA subfamily. In terms of assembly, homodimer.

Its subcellular location is the cytoplasm. It carries out the reaction dUMP + (6R)-5,10-methylene-5,6,7,8-tetrahydrofolate = 7,8-dihydrofolate + dTMP. It participates in pyrimidine metabolism; dTTP biosynthesis. Catalyzes the reductive methylation of 2'-deoxyuridine-5'-monophosphate (dUMP) to 2'-deoxythymidine-5'-monophosphate (dTMP) while utilizing 5,10-methylenetetrahydrofolate (mTHF) as the methyl donor and reductant in the reaction, yielding dihydrofolate (DHF) as a by-product. This enzymatic reaction provides an intracellular de novo source of dTMP, an essential precursor for DNA biosynthesis. This is Thymidylate synthase from Cytophaga hutchinsonii (strain ATCC 33406 / DSM 1761 / CIP 103989 / NBRC 15051 / NCIMB 9469 / D465).